The primary structure comprises 74 residues: Turripeptide OL135 (74 aa).

An N-terminal signal peptide occupies residues 1-20 (MKVPIVLMLVLLLIMPLSDG). The propeptide occupies 21–28 (YERKRXXX).

Belongs to the conopeptide P-like superfamily. Post-translationally, contains 3 disulfide bonds. Expressed by the venom duct.

It localises to the secreted. Functionally, acts as a neurotoxin by inhibiting an ion channel. This is Turripeptide OL135 from Iotyrris olangoensis (Sea snail).